Reading from the N-terminus, the 311-residue chain is Probable manganese-dependent inorganic pyrophosphatase (311 aa).

Mn(2+) contacts are provided by His9, Asp13, Asp15, Asp75, His97, and Asp149.

It belongs to the PPase class C family. It depends on Mn(2+) as a cofactor.

It localises to the cytoplasm. The enzyme catalyses diphosphate + H2O = 2 phosphate + H(+). The chain is Probable manganese-dependent inorganic pyrophosphatase from Lactobacillus gasseri (strain ATCC 33323 / DSM 20243 / BCRC 14619 / CIP 102991 / JCM 1131 / KCTC 3163 / NCIMB 11718 / NCTC 13722 / AM63).